The chain runs to 327 residues: NADPH-dependent aldose reductase GRE3 (327 aa).

Catalysis depends on Y49, which acts as the Proton donor. H111 is a substrate binding site. Residue 219–286 participates in NADP(+) binding; sequence SSFGPQSFIE…SSKKERLLGN (68 aa).

The protein belongs to the aldo/keto reductase family. Monomer.

Its subcellular location is the cytoplasm. It localises to the nucleus. The catalysed reaction is an alditol + NAD(+) = an aldose + NADH + H(+). The enzyme catalyses an alditol + NADP(+) = an aldose + NADPH + H(+). Functionally, aldose reductase with a broad substrate specificity. Reduces the cytotoxic compound methylglyoxal (MG) to acetol and (R)-lactaldehyde under stress conditions. MG is synthesized via a bypath of glycolysis from dihydroxyacetone phosphate and is believed to play a role in cell cycle regulation and stress adaptation. In pentose-fermenting yeasts, aldose reductase catalyzes the reduction of xylose into xylitol. The purified enzyme catalyzes this reaction, but the inability of S.cerevisiae to grow on xylose as sole carbon source indicates that the physiological function is more likely methylglyoxal reduction. In Saccharomyces cerevisiae (strain ATCC 204508 / S288c) (Baker's yeast), this protein is NADPH-dependent aldose reductase GRE3.